Reading from the N-terminus, the 466-residue chain is Cysteine--tRNA ligase (466 aa).

Cysteine 28 contributes to the Zn(2+) binding site. The short motif at 30-40 (PTVYNYIHIGN) is the 'HIGH' region element. Residues cysteine 208, histidine 233, and glutamate 237 each coordinate Zn(2+). The 'KMSKS' region motif lies at 265 to 269 (KMSKS). Lysine 268 provides a ligand contact to ATP.

It belongs to the class-I aminoacyl-tRNA synthetase family. Monomer. The cofactor is Zn(2+).

It is found in the cytoplasm. It catalyses the reaction tRNA(Cys) + L-cysteine + ATP = L-cysteinyl-tRNA(Cys) + AMP + diphosphate. The polypeptide is Cysteine--tRNA ligase (Staphylococcus aureus (strain USA300)).